We begin with the raw amino-acid sequence, 262 residues long: Small ribosomal subunit protein uS2 (262 aa).

It belongs to the universal ribosomal protein uS2 family.

The sequence is that of Small ribosomal subunit protein uS2 from Rhodospirillum rubrum (strain ATCC 11170 / ATH 1.1.1 / DSM 467 / LMG 4362 / NCIMB 8255 / S1).